Consider the following 198-residue polypeptide: Inner membrane-spanning protein YciB (198 aa).

The next 5 membrane-spanning stretches (helical) occupy residues 36–56, 67–87, 90–110, 135–155, and 162–182; these read IYSA…AIFI, LTLV…SETF, WKAP…HFIG, VAWI…AFTF, and FKVF…GIYL.

This sequence belongs to the YciB family.

Its subcellular location is the cell inner membrane. In terms of biological role, plays a role in cell envelope biogenesis, maintenance of cell envelope integrity and membrane homeostasis. The chain is Inner membrane-spanning protein YciB from Pseudomonas fluorescens (strain SBW25).